Consider the following 903-residue polypeptide: Disintegrin and metalloproteinase domain-containing protein 12 (903 aa).

Residues 1–31 form the signal peptide; sequence MAERPARRAPPARALLLALAGALLAPRAARG. The propeptide occupies 32–205; the sequence is MSLWDQRGTY…SQMRARRHKR (174 aa). N-linked (GlcNAc...) asparagine glycosylation is found at Asn-112, Asn-147, and Asn-157. The Cysteine switch motif lies at 175–182; that stretch reads GLCGSQHN. Cys-177 serves as a coordination point for Zn(2+). Asn-182 and Asn-185 each carry an N-linked (GlcNAc...) asparagine glycan. Residues 206–706 lie on the Extracellular side of the membrane; the sequence is ETLKMTKYVE…GPIRQADNQG (501 aa). Residues 212-414 enclose the Peptidase M12B domain; it reads KYVELVIVAD…GMGMCLFNLP (203 aa). Intrachain disulfides connect Cys-323/Cys-409, Cys-365/Cys-393, and Cys-367/Cys-376. Zn(2+) is bound at residue His-348. The active site involves Glu-349. The Zn(2+) site is built by His-352 and His-358. Residues 422-508 form the Disintegrin domain; that stretch reads GRKCGNGYVE…HCPANVYLHD (87 aa). N-linked (GlcNAc...) asparagine glycosylation occurs at Asn-450. An intrachain disulfide couples Cys-480 to Cys-500. The N-linked (GlcNAc...) asparagine glycan is linked to Asn-649. An EGF-like domain is found at 654 to 686; sequence GVHKCAMQCHGRGVCNNRKNCHCEAHWAPPFCD. Disulfide bonds link Cys-658-Cys-668, Cys-662-Cys-674, and Cys-676-Cys-685. A helical membrane pass occupies residues 707-727; it reads LTVGILVSILCLLAAGFVVYL. The Cytoplasmic segment spans residues 728-903; that stretch reads KRKTLMRLLF…PRPSHNAYIK (176 aa). Disordered regions lie at residues 753-790 and 819-903; these read SRTPSGPHLGQAHHTPGKGLLMNRAPHFNTPKDRHSLK and HQTP…AYIK. 2 consecutive short sequence motifs (SH3-binding; class II) follow at residues 824 to 830 and 846 to 852; these read APSGPAR and KPSPPQK. 3 short sequence motifs (SH3-binding; class I) span residues 830 to 837, 852 to 858, and 881 to 887; these read RPLPASPA, KPLPADP, and RPAPIRP. Positions 847–856 are enriched in pro residues; the sequence is PSPPQKPLPA. At Tyr-901 the chain carries Phosphotyrosine; by SRC.

In terms of assembly, interacts with alpha-actinin-2 and with syndecans. Interacts with SH3PXD2A. Interacts with FST3. Interacts with RACK1; the interaction is required for PKC-dependent translocation of ADAM12 to the cell membrane. The cofactor is Zn(2+). Post-translationally, the precursor is cleaved by a furin endopeptidase. As to expression, expressed during early developing mesenchymal cells that give rise to skeletal muscle, bones and visceral organs. Not expressed in adult normal muscle but expressed in regenerating muscle.

Its subcellular location is the membrane. Involved in skeletal muscle regeneration, specifically at the onset of cell fusion. Also involved in macrophage-derived giant cells (MGC) and osteoclast formation from mononuclear precursors. This Mus musculus (Mouse) protein is Disintegrin and metalloproteinase domain-containing protein 12 (Adam12).